The chain runs to 136 residues: Alpha-2-purothionin (136 aa).

An N-terminal signal peptide occupies residues 1-27 (MGSKGLKGVMVCLLILGLVLEQVQVEG). Cystine bridges form between Cys30-Cys66, Cys31-Cys58, Cys39-Cys56, and Cys43-Cys52. Residues 73 to 136 (LALESNSDEP…GDAGLTSLDA (64 aa)) constitute a propeptide, acidic domain.

Belongs to the plant thionin (TC 1.C.44) family. 4 C-C subfamily.

Its subcellular location is the secreted. Its function is as follows. Thionins are small plant proteins which are toxic to animal cells. They seem to exert their toxic effect at the level of the cell membrane. Their precise function is not known. The sequence is that of Alpha-2-purothionin (THI1.2) from Triticum aestivum (Wheat).